The sequence spans 270 residues: Cyclohexanol dehydrogenase (270 aa).

Positions 19, 40, 78, 79, 105, 176, 180, 209, and 211 each coordinate NAD(+). Tyrosine 176 serves as the catalytic Proton acceptor.

The protein belongs to the short-chain dehydrogenases/reductases (SDR) family. In terms of assembly, homodimer.

Its subcellular location is the cytoplasm. It catalyses the reaction cyclohexanol + NAD(+) = cyclohexanone + NADH + H(+). Activity is enhanced by the addition of Ba(2+) and Mg(2+), but inhibited by the addition of Al(3+), Ca(2+), Co(2+), Cu(2+), Mn(2+) and Zn(2+). Catalyzes the oxidation of cyclohexanol to cyclohexanone. Can also use a broad range of other alcohols, including trans-cyclohexane-1,2-diol, trans-cyclopentane-1,2-diol, cyclopentanol, hexane-1,2-diol, ethanol, 1-propanol, 1-butanol, 1-pentanol and 1-hexanol. The polypeptide is Cyclohexanol dehydrogenase (Rhodococcus sp. (strain TK6)).